Here is a 388-residue protein sequence, read N- to C-terminus: Gastricsin (388 aa).

Residues Met-1–Ala-16 form the signal peptide. A propeptide spans Ala-17–Phe-59 (activation peptide). In terms of domain architecture, Peptidase A1 spans Tyr-73–Ala-385. Asp-91 is a catalytic residue. 2 disulfide bridges follow: Cys-104-Cys-109 and Cys-267-Cys-271. Residue Asp-276 is part of the active site. Cys-310 and Cys-343 are oxidised to a cystine.

It belongs to the peptidase A1 family.

The protein resides in the secreted. It carries out the reaction More restricted specificity than pepsin A, but shows preferential cleavage at Tyr-|-Xaa bonds. High activity on hemoglobin.. Hydrolyzes a variety of proteins. The polypeptide is Gastricsin (PGC) (Oryctolagus cuniculus (Rabbit)).